Reading from the N-terminus, the 449-residue chain is tRNA modification GTPase MnmE (449 aa).

(6S)-5-formyl-5,6,7,8-tetrahydrofolate contacts are provided by Arg-24, Glu-81, and Lys-121. Positions 218–375 (GLVVAITGPP…LIAALGKFAA (158 aa)) constitute a TrmE-type G domain. Residues 228 to 233 (NVGKST), 247 to 253 (SPHAGTT), and 272 to 275 (DTAG) each bind GTP. Ser-232 and Thr-253 together coordinate Mg(2+). (6S)-5-formyl-5,6,7,8-tetrahydrofolate is bound at residue Lys-449.

The protein belongs to the TRAFAC class TrmE-Era-EngA-EngB-Septin-like GTPase superfamily. TrmE GTPase family. As to quaternary structure, homodimer. Heterotetramer of two MnmE and two MnmG subunits. K(+) is required as a cofactor.

The protein localises to the cytoplasm. Its function is as follows. Exhibits a very high intrinsic GTPase hydrolysis rate. Involved in the addition of a carboxymethylaminomethyl (cmnm) group at the wobble position (U34) of certain tRNAs, forming tRNA-cmnm(5)s(2)U34. The polypeptide is tRNA modification GTPase MnmE (Rhodopseudomonas palustris (strain BisB18)).